The following is a 231-amino-acid chain: Quercetin 2,3-dioxygenase (231 aa).

Residues H57, H59, H101, and E103 each coordinate a divalent metal cation.

This sequence belongs to the pirin family. Zn(2+) is required as a cofactor. The cofactor is Co(2+). It depends on Fe(2+) as a cofactor.

It carries out the reaction quercetin + O2 = 2-(3,4-dihydroxybenzoyloxy)-4,6-dihydroxybenzoate + CO. It functions in the pathway flavonoid metabolism; quercetin degradation. With respect to regulation, inhibited by kojic acid, sodium diethyldithiocarbamate and 1,10-phenanthroline monohydrochloride. Has quercetin 2,3-dioxygenase activity in vitro. Its physiological role is unknown; however, may provide a mechanism that would avoid inhibition of key cellular proteins, such as DNA gyrase, by quercetin. The chain is Quercetin 2,3-dioxygenase (yhhW) from Escherichia coli (strain K12).